Here is a 312-residue protein sequence, read N- to C-terminus: MSLSKQPVIVIVGPTAVGKTKTGIELAKKLNGEIISGDSVQVYKQMDIGSAKVTQEEMEGIPHHLLDLVDPDDEMSVARFQTLARTAIDEIAAKGKLPIIVGGTGLYIRAILYDYQFTVQAENKVLREELEQFAQAEGATALHDRLRQLDAKRADEIHPNNIQRVVRAIEVAMSGQTQVSGSEPSLYDSLLFVLHMEDREQLYDRIDQRVDLMIEQGLVAEVDRLVAAGYRDTKAMQAIGYKEIVPVLEGAPLEPAVEQLKRNTRRFAKRQLTWFRHQFDGNWIEMGRLSFEENFKIIYDRTVGFLKAVKSE.

13-20 serves as a coordination point for ATP; sequence GPTAVGKT. A substrate-binding site is contributed by 15 to 20; that stretch reads TAVGKT. Interaction with substrate tRNA stretches follow at residues 38 to 41 and 163 to 167; these read DSVQ and QRVVR.

This sequence belongs to the IPP transferase family. As to quaternary structure, monomer. The cofactor is Mg(2+).

It catalyses the reaction adenosine(37) in tRNA + dimethylallyl diphosphate = N(6)-dimethylallyladenosine(37) in tRNA + diphosphate. In terms of biological role, catalyzes the transfer of a dimethylallyl group onto the adenine at position 37 in tRNAs that read codons beginning with uridine, leading to the formation of N6-(dimethylallyl)adenosine (i(6)A). This is tRNA dimethylallyltransferase from Exiguobacterium sibiricum (strain DSM 17290 / CCUG 55495 / CIP 109462 / JCM 13490 / 255-15).